A 449-amino-acid polypeptide reads, in one-letter code: MRECISIHVGQAGVQIGNACWELYCLEHGIQPDGQMPSDKTIGGGDDSFNTFFSETGAGKHVPRAVFVDLEPTVIDEVRTGTYRQLFHPEQLISGKEDAANNYARGHYTIGKEIIDLVLDRVRKLADQCTGLQGFLVFHSFGGGTGSGFTSLLMERLSVDYGKKSKLEFSIYPAPQVSTAVVEPYNSILTTHTTLEHSDCAFMVDNEAIYDICRRNLDIERPTYTNLNRLMSQIVSSITASLRFDGALNVDLTEFQTNLVPYPRIHFPLATYAPVISAEKAYHEQLSVAEITNACFEPANQMVKCDPRHGKYMACCLLYRGDVVPKDVNAAIATIKTKRTIQFVDWCPTGFKVGINYQPPTVVPGGDLAKVQRAVCMLSNTTAVAEAWARLDHKFDLMYAKRAFVHWYVGEGMEEGEFSEAREDMAALEKDYEEVGADSAEGDDEGDEY.

Residues 1–4 (MREC) carry the MREC motif motif. Q11 lines the GTP pocket. K40 carries the post-translational modification N6-acetyllysine. E71, S140, G144, T145, T179, N206, and N228 together coordinate GTP. E71 contributes to the Mg(2+) binding site. The active site involves E254. A 3'-nitrotyrosine modification is found at Y282. The disordered stretch occupies residues 429-449 (EKDYEEVGADSAEGDDEGDEY). Positions 431 to 449 (DYEEVGADSAEGDDEGDEY) are enriched in acidic residues. The residue at position 432 (Y432) is a Phosphotyrosine. Residue S439 is modified to Phosphoserine. Y449 carries the 3'-nitrotyrosine modification.

It belongs to the tubulin family. In terms of assembly, dimer of alpha and beta chains. A typical microtubule is a hollow water-filled tube with an outer diameter of 25 nm and an inner diameter of 15 nM. Alpha-beta heterodimers associate head-to-tail to form protofilaments running lengthwise along the microtubule wall with the beta-tubulin subunit facing the microtubule plus end conferring a structural polarity. Microtubules usually have 13 protofilaments but different protofilament numbers can be found in some organisms and specialized cells. It depends on Mg(2+) as a cofactor. Some glutamate residues at the C-terminus are polyglycylated, resulting in polyglycine chains on the gamma-carboxyl group. Glycylation is mainly limited to tubulin incorporated into axonemes (cilia and flagella) whereas glutamylation is prevalent in neuronal cells, centrioles, axonemes, and the mitotic spindle. Both modifications can coexist on the same protein on adjacent residues, and lowering polyglycylation levels increases polyglutamylation, and reciprocally. Cilia and flagella glycylation is required for their stability and maintenance. Flagella glycylation controls sperm motility. Post-translationally, some glutamate residues at the C-terminus are polyglutamylated, resulting in polyglutamate chains on the gamma-carboxyl group. Polyglutamylation plays a key role in microtubule severing by spastin (SPAST). SPAST preferentially recognizes and acts on microtubules decorated with short polyglutamate tails: severing activity by SPAST increases as the number of glutamates per tubulin rises from one to eight, but decreases beyond this glutamylation threshold. Glutamylation is also involved in cilia motility. In terms of processing, acetylation of alpha chains at Lys-40 is located inside the microtubule lumen. This modification has been correlated with increased microtubule stability, intracellular transport and ciliary assembly. Methylation of alpha chains at Lys-40 is found in mitotic microtubules and is required for normal mitosis and cytokinesis contributing to genomic stability. Post-translationally, nitration of Tyr-449 is irreversible and interferes with normal dynein intracellular distribution. In terms of processing, undergoes a tyrosination/detyrosination cycle, the cyclic removal and re-addition of a C-terminal tyrosine residue by the enzymes tubulin tyrosine carboxypeptidase (MATCAP1, VASH1 or VASH2) and tubulin tyrosine ligase (TTL), respectively. Tyrosination promotes microtubule interaction with CAP-Gly domain-containing proteins such as CLIP1, CLIP2 and DCTN1. Tyrosination regulates the initiation of dynein-dynactin motility via interaction with DCTN1, which brings the dynein-dynactin complex into contact with microtubules. In neurons, tyrosinated tubulins mediate the initiation of retrograde vesicle transport. Post-translationally, detyrosination is involved in metaphase plate congression by guiding chromosomes during mitosis: detyrosination promotes interaction with CENPE, promoting pole-proximal transport of chromosomes toward the equator. Detyrosination increases microtubules-dependent mechanotransduction in dystrophic cardiac and skeletal muscle. In cardiomyocytes, detyrosinated microtubules are required to resist to contractile compression during contraction: detyrosination promotes association with desmin (DES) at force-generating sarcomeres, leading to buckled microtubules and mechanical resistance to contraction.

Its subcellular location is the cytoplasm. The protein localises to the cytoskeleton. The catalysed reaction is GTP + H2O = GDP + phosphate + H(+). Functionally, tubulin is the major constituent of microtubules, a cylinder consisting of laterally associated linear protofilaments composed of alpha- and beta-tubulin heterodimers. Microtubules grow by the addition of GTP-tubulin dimers to the microtubule end, where a stabilizing cap forms. Below the cap, tubulin dimers are in GDP-bound state, owing to GTPase activity of alpha-tubulin. This chain is Tubulin alpha-1C chain (TUBA1C), found in Bos taurus (Bovine).